The primary structure comprises 143 residues: UPF0047 protein MTH_771 (143 aa).

It belongs to the UPF0047 family.

The sequence is that of UPF0047 protein MTH_771 from Methanothermobacter thermautotrophicus (strain ATCC 29096 / DSM 1053 / JCM 10044 / NBRC 100330 / Delta H) (Methanobacterium thermoautotrophicum).